A 333-amino-acid polypeptide reads, in one-letter code: Phosphoribosylformylglycinamidine cyclo-ligase (333 aa).

The protein belongs to the AIR synthase family.

It is found in the cytoplasm. It catalyses the reaction 2-formamido-N(1)-(5-O-phospho-beta-D-ribosyl)acetamidine + ATP = 5-amino-1-(5-phospho-beta-D-ribosyl)imidazole + ADP + phosphate + H(+). It functions in the pathway purine metabolism; IMP biosynthesis via de novo pathway; 5-amino-1-(5-phospho-D-ribosyl)imidazole from N(2)-formyl-N(1)-(5-phospho-D-ribosyl)glycinamide: step 2/2. This chain is Phosphoribosylformylglycinamidine cyclo-ligase, found in Methanosarcina mazei (strain ATCC BAA-159 / DSM 3647 / Goe1 / Go1 / JCM 11833 / OCM 88) (Methanosarcina frisia).